The sequence spans 67 residues: Putative ATP synthase subunit epsilon, mitochondrial (67 aa).

This sequence belongs to the eukaryotic ATPase epsilon family. As to quaternary structure, F-type ATPases have 2 components, CF(1) - the catalytic core - and CF(0) - the membrane proton channel. CF(1) has five subunits: alpha(3), beta(3), gamma(1), delta(1), epsilon(1). CF(0) seems to have nine subunits: a, b, c, d, e, f, g, F6 and 8 (or A6L).

The protein localises to the mitochondrion. The protein resides in the mitochondrion inner membrane. Its function is as follows. Mitochondrial membrane ATP synthase (F(1)F(0) ATP synthase or Complex V) produces ATP from ADP in the presence of a proton gradient across the membrane which is generated by electron transport complexes of the respiratory chain. F-type ATPases consist of two structural domains, F(1) - containing the extramembraneous catalytic core, and F(0) - containing the membrane proton channel, linked together by a central stalk and a peripheral stalk. During catalysis, ATP synthesis in the catalytic domain of F(1) is coupled via a rotary mechanism of the central stalk subunits to proton translocation. Part of the complex F(1) domain and of the central stalk which is part of the complex rotary element. Rotation of the central stalk against the surrounding alpha(3)beta(3) subunits leads to hydrolysis of ATP in three separate catalytic sites on the beta subunits. This chain is Putative ATP synthase subunit epsilon, mitochondrial (atp15), found in Schizosaccharomyces pombe (strain 972 / ATCC 24843) (Fission yeast).